The sequence spans 297 residues: Homoserine kinase (297 aa).

An ATP-binding site is contributed by 82 to 92 (PVSRGLGSSAA).

This sequence belongs to the GHMP kinase family. Homoserine kinase subfamily.

Its subcellular location is the cytoplasm. It carries out the reaction L-homoserine + ATP = O-phospho-L-homoserine + ADP + H(+). The protein operates within amino-acid biosynthesis; L-threonine biosynthesis; L-threonine from L-aspartate: step 4/5. Catalyzes the ATP-dependent phosphorylation of L-homoserine to L-homoserine phosphate. This chain is Homoserine kinase, found in Clostridium botulinum (strain Loch Maree / Type A3).